The following is a 319-amino-acid chain: Mitochondrial fission regulator 1-like (319 aa).

Residues 1–35 (MASLGAGAEPESVLFGKDGTEACESPEGRRSGRRK) are disordered.

It belongs to the MTFR1 family.

The protein resides in the mitochondrion outer membrane. Mitochondrial protein required for adaptation of miochondrial dynamics to metabolic changes. Regulates mitochondrial morphology at steady state and mediates AMPK-dependent stress-induced mitochondrial fragmentation via the control of OPA1 levels. The polypeptide is Mitochondrial fission regulator 1-like (mtfr1l) (Xenopus tropicalis (Western clawed frog)).